The following is a 286-amino-acid chain: Translocon-associated protein subunit alpha (286 aa).

An N-terminal signal peptide occupies residues 1 to 23 (MRVLPRLLLLLLLAFPAAVLLRG). At 24 to 207 (GPGGSLVAAQ…EREDGLDGET (184 aa)) the chain is on the lumenal side. The span at 37–75 (EDEETVEDSIIEDEDDEAEVEEDEPTDLAEDKEEEDVSG) shows a compositional bias: acidic residues. The tract at residues 37 to 83 (EDEETVEDSIIEDEDDEAEVEEDEPTDLAEDKEEEDVSGEPEASPSA) is disordered. Residues Asn-136 and Asn-191 are each glycosylated (N-linked (GlcNAc...) asparagine). Residues 208–228 (IFMYMFLAGLGLLVVVGLHQL) traverse the membrane as a helical segment. Topologically, residues 229–286 (LESRKRKRPIQKVEMGTSSQNDVDMSWIPQETLNQINKASPRRLPRKRAQKRSVGSDE) are cytoplasmic. Position 247 is a phosphoserine (Ser-247). The residue at position 260 (Thr-260) is a Phosphothreonine. A disordered region spans residues 261–286 (LNQINKASPRRLPRKRAQKRSVGSDE). Ser-268 carries the phosphoserine modification. Positions 268–279 (SPRRLPRKRAQK) are enriched in basic residues.

This sequence belongs to the TRAP-alpha family. In terms of assembly, heterotetramer of TRAP-alpha, TRAP-beta, TRAP-delta and TRAP-gamma. Interacts with palmitoylated calnexin (CALX), the interaction is required for efficient folding of glycosylated proteins. Phosphorylated in its cytoplasmic tail.

It localises to the endoplasmic reticulum membrane. TRAP proteins are part of a complex whose function is to bind calcium to the ER membrane and thereby regulate the retention of ER resident proteins. May be involved in the recycling of the translocation apparatus after completion of the translocation process or may function as a membrane-bound chaperone facilitating folding of translocated proteins. The chain is Translocon-associated protein subunit alpha (SSR1) from Canis lupus familiaris (Dog).